Reading from the N-terminus, the 2552-residue chain is Probable polyketide synthase 40 (2552 aa).

A Ketosynthase family 3 (KS3) domain is found at 13–443 (CNKVAIIGIG…GSNCCLIVSS (431 aa)). Catalysis depends on for beta-ketoacyl synthase activity residues C179, H320, and H362. The tract at residues 629-662 (GIKPSIIVGHSLGEISSSYCSGMIDLDTFCYLIY) is acyl/malonyl transferase. Residue S639 is the For acyl/malonyl transferase activity of the active site. Positions 928–1063 (INHLGISNSN…ANFQLFSRGQ (136 aa)) are N-terminal hotdog fold. In terms of domain architecture, PKS/mFAS DH spans 928-1235 (INHLGISNSN…FKSTTKIKDS (308 aa)). The active-site Proton acceptor; for dehydratase activity is the H962. The C-terminal hotdog fold stretch occupies residues 1087 to 1235 (NLTKLSKQEL…FKSTTKIKDS (149 aa)). D1149 (proton donor; for dehydratase activity) is an active-site residue. A Carrier domain is found at 2467 to 2546 (DNVELTVDQL…SFIQLVKNSI (80 aa)). S2505 bears the O-(pantetheine 4'-phosphoryl)serine mark.

Pantetheine 4'-phosphate serves as cofactor.

Probable polyketide synthase. The chain is Probable polyketide synthase 40 (pks40) from Dictyostelium discoideum (Social amoeba).